Reading from the N-terminus, the 671-residue chain is MDKHQAEKRLKELRLLLEDYGYHYYVLDTPKVPDSEYDRLMNELLQLEADYPDLVTEDSPSVRIGGPPAPSFKKVAHRVPMMSLSNAFNEEDLRAFDRRVRQAVGEHVSYVCELKFDGLAVSLTYENGKLVRGATRGDGTIGEDITNNLRTVPAIPLRLKQPYSIEVRGEAYMPKASFERLNEAKEQAGEEKFANPRNAAAGSLRQLDPKIAAKRNLSLFAYSIGEVEGKNVQTHFDSLMFLKELGFKVNEEAAECETIEDVIAYTEKWSERRHELPYEIDGVVVKVNSLADHEKLGFTAKSPRWATAFKFPAEEVLTVLRDIELNVGRTGVVTPTALLDPVLVAGTTVRRASLHNEDLIREKDVKLGDTVIVKKAGDIIPEVVGVLTDKRTGEEVDFHMPTECPECHSVLERLEGEVALRCLNPKCPAQIREGLIHFVSRNAMNIDGLGEKVISQLFLHQLIADVADLYLLEREELLQLERMGEKSVDNLLAAIEASKENSLERLLFGLGIRFVGAKAAKTLAYEFETMERLQEATFEQLLAVNEIGEKMADSIVSYFQKPEVATLLEKLANAGVNMTYTGPKKAAIAEEAGVFAGKTVVLTGKLSQWTRKEAQEKIEALGGTVTGSVSKKTDLVVAGEDAGSKQKKAESIGIEIWTEEQFTQAVEQSEQ.

NAD(+) contacts are provided by residues 34–38 (DSEYD), 83–84 (SL), and Glu-113. The active-site N6-AMP-lysine intermediate is the Lys-115. Residues Arg-136, Glu-170, Lys-286, and Lys-310 each contribute to the NAD(+) site. Residues Cys-404, Cys-407, Cys-422, and Cys-427 each contribute to the Zn(2+) site. Residues 590 to 671 (EEAGVFAGKT…FTQAVEQSEQ (82 aa)) form the BRCT domain.

This sequence belongs to the NAD-dependent DNA ligase family. LigA subfamily. It depends on Mg(2+) as a cofactor. The cofactor is Mn(2+).

It catalyses the reaction NAD(+) + (deoxyribonucleotide)n-3'-hydroxyl + 5'-phospho-(deoxyribonucleotide)m = (deoxyribonucleotide)n+m + AMP + beta-nicotinamide D-nucleotide.. Functionally, DNA ligase that catalyzes the formation of phosphodiester linkages between 5'-phosphoryl and 3'-hydroxyl groups in double-stranded DNA using NAD as a coenzyme and as the energy source for the reaction. It is essential for DNA replication and repair of damaged DNA. The polypeptide is DNA ligase (Shouchella clausii (strain KSM-K16) (Alkalihalobacillus clausii)).